Consider the following 364-residue polypeptide: Ribosomal RNA large subunit methyltransferase M (364 aa).

S-adenosyl-L-methionine-binding positions include Ser187, 220-223 (CPGG), Asp239, Asp259, and Asp276. Lys305 (proton acceptor) is an active-site residue.

Belongs to the class I-like SAM-binding methyltransferase superfamily. RNA methyltransferase RlmE family. RlmM subfamily. In terms of assembly, monomer.

Its subcellular location is the cytoplasm. It carries out the reaction cytidine(2498) in 23S rRNA + S-adenosyl-L-methionine = 2'-O-methylcytidine(2498) in 23S rRNA + S-adenosyl-L-homocysteine + H(+). Catalyzes the 2'-O-methylation at nucleotide C2498 in 23S rRNA. This Aeromonas hydrophila subsp. hydrophila (strain ATCC 7966 / DSM 30187 / BCRC 13018 / CCUG 14551 / JCM 1027 / KCTC 2358 / NCIMB 9240 / NCTC 8049) protein is Ribosomal RNA large subunit methyltransferase M.